The primary structure comprises 349 residues: tRNA pseudouridine synthase D (349 aa).

A substrate-binding site is contributed by Phe27. The Nucleophile role is filled by Asp80. Asn129 serves as a coordination point for substrate. The TRUD domain occupies Gly155–Leu303. A substrate-binding site is contributed by Phe329.

The protein belongs to the pseudouridine synthase TruD family.

The enzyme catalyses uridine(13) in tRNA = pseudouridine(13) in tRNA. In terms of biological role, responsible for synthesis of pseudouridine from uracil-13 in transfer RNAs. The sequence is that of tRNA pseudouridine synthase D from Escherichia coli O6:K15:H31 (strain 536 / UPEC).